We begin with the raw amino-acid sequence, 177 residues long: Large ribosomal subunit protein uL6 (177 aa).

It belongs to the universal ribosomal protein uL6 family. Part of the 50S ribosomal subunit.

This protein binds to the 23S rRNA, and is important in its secondary structure. It is located near the subunit interface in the base of the L7/L12 stalk, and near the tRNA binding site of the peptidyltransferase center. This is Large ribosomal subunit protein uL6 from Parvibaculum lavamentivorans (strain DS-1 / DSM 13023 / NCIMB 13966).